Here is a 375-residue protein sequence, read N- to C-terminus: Trichodiene synthase (375 aa).

The protein belongs to the trichodiene synthase family.

It catalyses the reaction (2E,6E)-farnesyl diphosphate = trichodiene + diphosphate. It participates in sesquiterpene biosynthesis; trichothecene biosynthesis. Its function is as follows. TS is a member of the terpene cyclase group of enzymes. It catalyzes the isomerization and cyclization of farnesyl pyro-phosphate to form trichodiene, the first cyclic intermediate in the biosynthetic pathway for trichothecenes. It serves to branch trichothecene biosynthesis from the isoprenoid pathway. This Fusarium culmorum protein is Trichodiene synthase (TRI5).